The chain runs to 108 residues: Large ribosomal subunit protein uL24 (108 aa).

Belongs to the universal ribosomal protein uL24 family. As to quaternary structure, part of the 50S ribosomal subunit.

In terms of biological role, one of two assembly initiator proteins, it binds directly to the 5'-end of the 23S rRNA, where it nucleates assembly of the 50S subunit. Functionally, one of the proteins that surrounds the polypeptide exit tunnel on the outside of the subunit. The sequence is that of Large ribosomal subunit protein uL24 from Geotalea daltonii (strain DSM 22248 / JCM 15807 / FRC-32) (Geobacter daltonii).